Reading from the N-terminus, the 357-residue chain is Glutamate 5-kinase (357 aa).

Position 7 (Lys-7) interacts with ATP. Residues Ser-43, Asp-130, and Asn-142 each coordinate substrate. 162-163 contacts ATP; the sequence is TD. The PUA domain maps to 270–347; it reads QGELTLDAGA…PAAGPSPVVV (78 aa).

The protein belongs to the glutamate 5-kinase family.

It is found in the cytoplasm. It catalyses the reaction L-glutamate + ATP = L-glutamyl 5-phosphate + ADP. Its pathway is amino-acid biosynthesis; L-proline biosynthesis; L-glutamate 5-semialdehyde from L-glutamate: step 1/2. Catalyzes the transfer of a phosphate group to glutamate to form L-glutamate 5-phosphate. This Parasynechococcus marenigrum (strain WH8102) protein is Glutamate 5-kinase.